The sequence spans 742 residues: MSLLLEPTPTMIKEEKLYREMGLTDEEFAMIEKILGRLPNYTETGIFSVMWSEHCSYKNSKPVLKKFPTEGKHVLQGPGEGAGIVDIGDGLAVAFKIESHNHPSAIEPYQGAATGVGGIIRDVFSMGARPIALLNSLRFGELTSPRVKYLFEHVVAGIAGYGNCVGIPTVGGEVQFDAAYEGNPLVNAMCVGIIRHEDIQRGIASGVGNTVMYVGAKTGRDGIHGATFASEELTEQSEAKRPAVQVGDPFMEKLLLEACLEVVKSDALVGIQDMGAAGLTSSSAEMASKGGFGIEMNLDLVPQREAGMTPYEMMLSESQERMLLVVKQGREQEIYELFAKYGLEAKAIGKVTDDKMLRLYFRGEVVAEIPVDALAKDAPVYHKPSKEPAYYREFQAMEPYVPAVSNYEETLLSLLAQPTIASKEWVYQQYDYMVRTNTVVAPGSDAAVLRIRGTNKALAMTTDCNSRYIYLDPETGGKIAVAEAARNIVCSGAKPLAITDCLNFGNPEKPEIFWQLEKAVDGMSEVCRVLGTPVISGNVSLYNETNGEAIYPTPVIGMVGLVEDIRHITTQAFQQAGDLIYVIGEAKQEFGGSELQKLLEGRIFGKAPEIDLATEAKRQQELLTAIQAGVVASAHDIAEGGFAVALAECVMSTNGLGAKVTVDGDITSQLFSETQSRFIVSVKKENQEKFEKLVEAKLIGEVTNDGTLLVERASGEVVIQLSVEQMRSVWKGAIPCLLKSKA.

His-54 is a catalytic residue. ATP-binding residues include Tyr-57 and Lys-96. Mg(2+) is bound at residue Glu-98. Residues 99–102 (SHNH) and Arg-121 contribute to the substrate site. His-100 serves as the catalytic Proton acceptor. Asp-122 serves as a coordination point for Mg(2+). Gln-245 lines the substrate pocket. Asp-273 is a Mg(2+) binding site. Residue 317–319 (ESQ) participates in substrate binding. Positions 500 and 537 each coordinate ATP. Asn-538 contacts Mg(2+). Position 540 (Ser-540) interacts with substrate.

The protein belongs to the FGAMS family. Monomer. Part of the FGAM synthase complex composed of 1 PurL, 1 PurQ and 2 PurS subunits.

The protein resides in the cytoplasm. It catalyses the reaction N(2)-formyl-N(1)-(5-phospho-beta-D-ribosyl)glycinamide + L-glutamine + ATP + H2O = 2-formamido-N(1)-(5-O-phospho-beta-D-ribosyl)acetamidine + L-glutamate + ADP + phosphate + H(+). Its pathway is purine metabolism; IMP biosynthesis via de novo pathway; 5-amino-1-(5-phospho-D-ribosyl)imidazole from N(2)-formyl-N(1)-(5-phospho-D-ribosyl)glycinamide: step 1/2. In terms of biological role, part of the phosphoribosylformylglycinamidine synthase complex involved in the purines biosynthetic pathway. Catalyzes the ATP-dependent conversion of formylglycinamide ribonucleotide (FGAR) and glutamine to yield formylglycinamidine ribonucleotide (FGAM) and glutamate. The FGAM synthase complex is composed of three subunits. PurQ produces an ammonia molecule by converting glutamine to glutamate. PurL transfers the ammonia molecule to FGAR to form FGAM in an ATP-dependent manner. PurS interacts with PurQ and PurL and is thought to assist in the transfer of the ammonia molecule from PurQ to PurL. This Geobacillus sp. (strain WCH70) protein is Phosphoribosylformylglycinamidine synthase subunit PurL.